The sequence spans 131 residues: uncharacterized protein (131 aa).

The HTH hxlR-type domain occupies 26–124 (CSVEVAVNEI…WGKMYGSHQE (99 aa)).

This is an uncharacterized protein from Methanothermobacter thermautotrophicus (strain ATCC 29096 / DSM 1053 / JCM 10044 / NBRC 100330 / Delta H) (Methanobacterium thermoautotrophicum).